The following is a 436-amino-acid chain: Glutamyl-tRNA reductase (436 aa).

Residues 49-52, S109, 114-116, and Q120 each bind substrate; these read TCNR and EGQ. C50 (nucleophile) is an active-site residue. 198 to 203 serves as a coordination point for NADP(+); the sequence is GAGRMS.

Belongs to the glutamyl-tRNA reductase family. As to quaternary structure, homodimer.

It carries out the reaction (S)-4-amino-5-oxopentanoate + tRNA(Glu) + NADP(+) = L-glutamyl-tRNA(Glu) + NADPH + H(+). It functions in the pathway porphyrin-containing compound metabolism; protoporphyrin-IX biosynthesis; 5-aminolevulinate from L-glutamyl-tRNA(Glu): step 1/2. It participates in porphyrin-containing compound metabolism; chlorophyll biosynthesis. Catalyzes the NADPH-dependent reduction of glutamyl-tRNA(Glu) to glutamate 1-semialdehyde (GSA). The sequence is that of Glutamyl-tRNA reductase from Prochlorococcus marinus (strain MIT 9303).